A 628-amino-acid polypeptide reads, in one-letter code: (+)-alpha pinene synthase 1, chloroplastic (628 aa).

The transit peptide at 1-18 (MALVSAVPLNSKLCLCRT) directs the protein to the chloroplast. 3 residues coordinate Mg(2+): aspartate 379, aspartate 383, and aspartate 531. Residues 379 to 383 (DDIYD) carry the DDXXD motif motif.

Belongs to the terpene synthase family. Tpsd subfamily. The cofactor is Mg(2+). It depends on Mn(2+) as a cofactor.

The protein localises to the plastid. It localises to the chloroplast. It carries out the reaction (2E)-geranyl diphosphate = (1R,5R)-alpha-pinene + diphosphate. It participates in terpene metabolism; oleoresin biosynthesis. Its pathway is secondary metabolite biosynthesis; terpenoid biosynthesis. Monoterpene synthase (TPS) involved in the biosynthesis of monoterpene natural products included in conifer oleoresin secretions and volatile emissions; these compounds contribute to biotic and abiotic stress defense against herbivores and pathogens. Catalyzes the conversion of (2E)-geranyl diphosphate (GPP) to (+)-alpha-pinene. This chain is (+)-alpha pinene synthase 1, chloroplastic, found in Pinus banksiana (Jack pine).